Reading from the N-terminus, the 187-residue chain is UPF0301 protein WIGBR1650 (187 aa).

Belongs to the UPF0301 (AlgH) family.

The chain is UPF0301 protein WIGBR1650 from Wigglesworthia glossinidia brevipalpis.